A 2300-amino-acid polypeptide reads, in one-letter code: Protein hobbit (2300 aa).

The first 21 residues, methionine 1–proline 21, serve as a signal peptide directing secretion. Residues glycine 23–lysine 117 are transmembrane domain. Disordered regions lie at residues threonine 269 to aspartate 290 and valine 2111 to glycine 2148. Over residues serine 270–leucine 282 the composition is skewed to polar residues. The segment at valine 1750–aspartate 2300 is required for endoplasmic reticulum-cell membrane contact sites location and binding to phosphatidylinositols. Positions alanine 2119–lysine 2140 are enriched in low complexity.

The protein localises to the cell membrane. Its subcellular location is the endoplasmic reticulum membrane. It localises to the mitochondrion membrane. Tube-forming lipid transport protein which binds to phosphatidylinositols and affects phosphatidylinositol-4,5-bisphosphate (PtdIns-4,5-P2) distribution. The sequence is that of Protein hobbit from Drosophila melanogaster (Fruit fly).